The primary structure comprises 319 residues: tRNA uridine(34) hydroxylase (319 aa).

The 95-residue stretch at 124 to 218 (LDEDTVILDA…YGKNEETKGE (95 aa)) folds into the Rhodanese domain. Cys178 functions as the Cysteine persulfide intermediate in the catalytic mechanism.

The protein belongs to the TrhO family.

The enzyme catalyses uridine(34) in tRNA + AH2 + O2 = 5-hydroxyuridine(34) in tRNA + A + H2O. Functionally, catalyzes oxygen-dependent 5-hydroxyuridine (ho5U) modification at position 34 in tRNAs. This Listeria monocytogenes serovar 1/2a (strain ATCC BAA-679 / EGD-e) protein is tRNA uridine(34) hydroxylase.